A 55-amino-acid chain; its full sequence is Large ribosomal subunit protein bL33 (55 aa).

This sequence belongs to the bacterial ribosomal protein bL33 family.

This chain is Large ribosomal subunit protein bL33, found in Aliivibrio salmonicida (strain LFI1238) (Vibrio salmonicida (strain LFI1238)).